The sequence spans 201 residues: Small ribosomal subunit protein uS4c (201 aa).

Residues 20 to 39 (GLTRKTPKSGSNLKKKFHSG) form a disordered region. Positions 89 to 150 (MRLDNILFRL…NQRSKRLVQN (62 aa)) constitute an S4 RNA-binding domain.

The protein belongs to the universal ribosomal protein uS4 family. Part of the 30S ribosomal subunit. Contacts protein S5. The interaction surface between S4 and S5 is involved in control of translational fidelity.

It localises to the plastid. It is found in the chloroplast. One of the primary rRNA binding proteins, it binds directly to 16S rRNA where it nucleates assembly of the body of the 30S subunit. In terms of biological role, with S5 and S12 plays an important role in translational accuracy. The polypeptide is Small ribosomal subunit protein uS4c (rps4) (Oryza nivara (Indian wild rice)).